Here is a 545-residue protein sequence, read N- to C-terminus: Probable bifunctional tRNA threonylcarbamoyladenosine biosynthesis protein (545 aa).

A kae1 region spans residues methionine 1–tryptophan 329. 3 residues coordinate Fe cation: histidine 113, histidine 117, and tyrosine 134. Residues tyrosine 134–alanine 138, aspartate 166, glycine 179, glutamate 183, and asparagine 262 contribute to the L-threonylcarbamoyladenylate site. Aspartate 290 contributes to the Fe cation binding site. One can recognise a Protein kinase domain in the interval glutamate 340–alanine 545. ATP contacts are provided by residues leucine 353–valine 361 and lysine 375. Aspartate 462 (proton acceptor; for kinase activity) is an active-site residue.

It in the N-terminal section; belongs to the KAE1 / TsaD family. In the C-terminal section; belongs to the protein kinase superfamily. Tyr protein kinase family. BUD32 subfamily. As to quaternary structure, component of the KEOPS complex that consists of Kae1, Bud32, Cgi121 and Pcc1; the whole complex dimerizes. It depends on Fe(2+) as a cofactor.

The protein resides in the cytoplasm. It catalyses the reaction L-seryl-[protein] + ATP = O-phospho-L-seryl-[protein] + ADP + H(+). The enzyme catalyses L-threonyl-[protein] + ATP = O-phospho-L-threonyl-[protein] + ADP + H(+). The catalysed reaction is L-threonylcarbamoyladenylate + adenosine(37) in tRNA = N(6)-L-threonylcarbamoyladenosine(37) in tRNA + AMP + H(+). Its function is as follows. Required for the formation of a threonylcarbamoyl group on adenosine at position 37 (t(6)A37) in tRNAs that read codons beginning with adenine. Is a component of the KEOPS complex that is probably involved in the transfer of the threonylcarbamoyl moiety of threonylcarbamoyl-AMP (TC-AMP) to the N6 group of A37. The Kae1 domain likely plays a direct catalytic role in this reaction. The Bud32 domain probably displays kinase activity that regulates Kae1 function. The chain is Probable bifunctional tRNA threonylcarbamoyladenosine biosynthesis protein from Methanosarcina barkeri (strain Fusaro / DSM 804).